A 137-amino-acid chain; its full sequence is Oleosin Ara h 11.0102 (137 aa).

An N-acetylalanine; alternate modification is found at A2. Helical transmembrane passes span 27-47 (AVVAGGSLLILAGLVLAATVI) and 55-75 (LFVIFSPVLVPAVITVALLGL).

The protein belongs to the oleosin family. Expressed in seeds (at protein level).

The protein localises to the lipid droplet. It localises to the membrane. Its function is as follows. May have a structural role to stabilize the lipid body during desiccation of the seed by preventing coalescence of the oil. Probably interacts with both lipid and phospholipid moieties of lipid bodies. May also provide recognition signals for specific lipase anchorage in lipolysis during seedling growth. This is Oleosin Ara h 11.0102 from Arachis hypogaea (Peanut).